The sequence spans 346 residues: Cell division protein ZipA (346 aa).

Residues 1 to 6 are Periplasmic-facing; it reads MEDLQL. Residues 7-27 form a helical membrane-spanning segment; the sequence is VLFVLGAIAIVAVLVHGFWSI. Residues 28-346 are Cytoplasmic-facing; that stretch reads RRQQPKSLKD…DYLHRIRANA (319 aa). Disordered stretches follow at residues 76 to 103 and 121 to 145; these read ANEAHTPEAPAFNPYLKQEAKTQPQPVE and QPDFSLQSPTAKEQHRGPKASRQEP.

It belongs to the ZipA family. In terms of assembly, interacts with FtsZ via their C-terminal domains.

The protein resides in the cell inner membrane. Essential cell division protein that stabilizes the FtsZ protofilaments by cross-linking them and that serves as a cytoplasmic membrane anchor for the Z ring. Also required for the recruitment to the septal ring of downstream cell division proteins. The sequence is that of Cell division protein ZipA from Shewanella sp. (strain MR-4).